Here is a 306-residue protein sequence, read N- to C-terminus: Anamorsin homolog (306 aa).

The segment covering 1–25 has biased composition (basic and acidic residues); that stretch reads MVPPREDVTVRIVCERRRTAGKEAR. Residues 1–51 are disordered; it reads MVPPREDVTVRIVCERRRTAGKEARPPPSAKPTPGNTSSHPNAKETHRSNE. An N-terminal SAM-like domain region spans residues 59-190; it reads KQSHRRSIMA…RRNNTTNSVA (132 aa). A linker region spans residues 191–218; the sequence is TLNFASNNNNGNDLLIDEDNLLTDASNL. The [2Fe-2S] cluster site is built by Cys-236, Cys-242, Cys-245, and Cys-247. Positions 236-247 are fe-S binding site A; it reads CSGRAPCDDCTC. Basic and acidic residues predominate over residues 252–265; that stretch reads GAKEGNSEQPKEIK. A disordered region spans residues 252-272; that stretch reads GAKEGNSEQPKEIKSSSCGKC. Residues Cys-269, Cys-272, Cys-280, and Cys-283 each coordinate [4Fe-4S] cluster. 2 consecutive short sequence motifs (cx2C motif) follow at residues 269–272 and 280–283; these read CGKC and CASC. The fe-S binding site B stretch occupies residues 269-283; it reads CGKCSLGDAFRCASC.

The protein belongs to the anamorsin family. Monomer. [2Fe-2S] cluster serves as cofactor. Requires [4Fe-4S] cluster as cofactor.

It is found in the cytoplasm. It localises to the mitochondrion intermembrane space. Functionally, component of the cytosolic iron-sulfur (Fe-S) protein assembly (CIA) machinery. Required for the maturation of extramitochondrial Fe-S proteins. Part of an electron transfer chain functioning in an early step of cytosolic Fe-S biogenesis, facilitating the de novo assembly of a [4Fe-4S] cluster on the cytosolic Fe-S scaffold complex. Electrons are transferred from NADPH via a FAD- and FMN-containing diflavin oxidoreductase. Together with the diflavin oxidoreductase, also required for the assembly of the diferric tyrosyl radical cofactor of ribonucleotide reductase (RNR), probably by providing electrons for reduction during radical cofactor maturation in the catalytic small subunit. This chain is Anamorsin homolog, found in Phaeodactylum tricornutum (strain CCAP 1055/1).